The primary structure comprises 450 residues: tRNA modification GTPase MnmE (450 aa).

Positions 23, 79, and 118 each coordinate (6S)-5-formyl-5,6,7,8-tetrahydrofolate. The TrmE-type G domain occupies 214–374 (GITLILVGKP…LKEHILNKVG (161 aa)). A K(+)-binding site is contributed by Asn-224. Residues 224-229 (NAGKSS), 243-249 (TSIAGTT), and 268-271 (DTAG) each bind GTP. Mg(2+) is bound at residue Ser-228. The K(+) site is built by Thr-243, Ile-245, and Thr-248. Thr-249 serves as a coordination point for Mg(2+). Lys-450 serves as a coordination point for (6S)-5-formyl-5,6,7,8-tetrahydrofolate.

It belongs to the TRAFAC class TrmE-Era-EngA-EngB-Septin-like GTPase superfamily. TrmE GTPase family. As to quaternary structure, homodimer. Heterotetramer of two MnmE and two MnmG subunits. Requires K(+) as cofactor.

Its subcellular location is the cytoplasm. Functionally, exhibits a very high intrinsic GTPase hydrolysis rate. Involved in the addition of a carboxymethylaminomethyl (cmnm) group at the wobble position (U34) of certain tRNAs, forming tRNA-cmnm(5)s(2)U34. This is tRNA modification GTPase MnmE from Francisella tularensis subsp. novicida (strain U112).